Here is a 310-residue protein sequence, read N- to C-terminus: Olfactory receptor 5AR1 (310 aa).

The Extracellular portion of the chain corresponds to methionine 1–isoleucine 25. The N-linked (GlcNAc...) asparagine glycan is linked to asparagine 5. A helical transmembrane segment spans residues isoleucine 26–isoleucine 46. Topologically, residues isoleucine 47–glutamine 54 are cytoplasmic. A helical membrane pass occupies residues leucine 55 to serine 75. Residues alanine 76–threonine 99 lie on the Extracellular side of the membrane. Cysteine 97 and cysteine 189 form a disulfide bridge. Residues glutamine 100–tyrosine 120 traverse the membrane as a helical segment. At aspartate 121 to serine 133 the chain is on the cytoplasmic side. The chain crosses the membrane as a helical span at residues threonine 134–valine 154. Residues serine 155 to glutamate 196 are Extracellular-facing. The chain crosses the membrane as a helical span at residues isoleucine 197–serine 217. Cysteine 203 is a Cu cation binding site. The Cytoplasmic portion of the chain corresponds to tyrosine 218–alanine 237. A helical transmembrane segment spans residues phenylalanine 238–methionine 258. Methionine 256 and arginine 261 together coordinate Cu cation. Residues tyrosine 259 to aspartate 271 lie on the Extracellular side of the membrane. The helical transmembrane segment at lysine 272–leucine 292 threads the bilayer. At arginine 293 to glutamine 310 the chain is on the cytoplasmic side.

It belongs to the G-protein coupled receptor 1 family.

The protein resides in the cell membrane. Its activity is regulated as follows. Copper binding enhances receptor activity in response to odorant binding. Olfactory receptor that is activated by the binding of organosulfur odorants with thioether groups such as (methylthio)methanethiol (MTMT). The activity of this receptor is mediated by G proteins which activate adenylyl cyclase. The protein is Olfactory receptor 5AR1 of Mus musculus (Mouse).